A 115-amino-acid chain; its full sequence is Large ribosomal subunit protein P1 (115 aa).

The span at 56 to 73 shows a compositional bias: low complexity; sequence QAAAAPVPASGGAAAPAE. The tract at residues 56–115 is disordered; sequence QAAAAPVPASGGAAAPAEGDADEADEADEEAEEEAADDGGDDDDDEDDEASGEGLGELFG. Residues 74–106 show a composition bias toward acidic residues; it reads GDADEADEADEEAEEEAADDGGDDDDDEDDEAS.

Belongs to the eukaryotic ribosomal protein P1/P2 family. As to quaternary structure, part of the 50S ribosomal subunit. Homodimer, it forms part of the ribosomal stalk which helps the ribosome interact with GTP-bound translation factors. Forms a heptameric uL10/P0(P1)2(P1)2(P1)2 complex, where uL10/P0 forms an elongated spine to which the P1 dimers bind in a sequential fashion.

In terms of biological role, forms part of the ribosomal stalk, playing a central role in the interaction of the ribosome with GTP-bound translation factors. The polypeptide is Large ribosomal subunit protein P1 (Haloarcula marismortui (strain ATCC 43049 / DSM 3752 / JCM 8966 / VKM B-1809) (Halobacterium marismortui)).